The primary structure comprises 316 residues: tRNA dimethylallyltransferase (316 aa).

17-24 (GPTASGKT) contacts ATP. Residue 19–24 (TASGKT) participates in substrate binding. Interaction with substrate tRNA stretches follow at residues 42–45 (DSAL), 166–170 (QRLSR), 247–252 (RCVGYR), and 280–287 (KRQITWLR).

The protein belongs to the IPP transferase family. As to quaternary structure, monomer. Mg(2+) is required as a cofactor.

The enzyme catalyses adenosine(37) in tRNA + dimethylallyl diphosphate = N(6)-dimethylallyladenosine(37) in tRNA + diphosphate. Its function is as follows. Catalyzes the transfer of a dimethylallyl group onto the adenine at position 37 in tRNAs that read codons beginning with uridine, leading to the formation of N6-(dimethylallyl)adenosine (i(6)A). The polypeptide is tRNA dimethylallyltransferase (Shigella flexneri serotype 5b (strain 8401)).